Reading from the N-terminus, the 162-residue chain is Ecotin (162 aa).

The signal sequence occupies residues 1–18; the sequence is MKMFVPAVVFAASASAWA. A disulfide bridge connects residues Cys-70 and Cys-107.

The protein belongs to the protease inhibitor I11 (ecotin) family. Homodimer.

It is found in the periplasm. In terms of biological role, general inhibitor of pancreatic serine proteases: inhibits chymotrypsin, trypsin, elastases, factor X, kallikrein as well as a variety of other proteases. In Salmonella arizonae (strain ATCC BAA-731 / CDC346-86 / RSK2980), this protein is Ecotin.